Reading from the N-terminus, the 248-residue chain is Glycoprotein BILF2 (248 aa).

The signal sequence occupies residues 1 to 17; it reads MTHLVLLLCCCVGSVCA. Residues 19 to 125 enclose the Ig-like domain; that stretch reads FSDLVKFENV…NVTLRNCSVA (107 aa). Asn27, Asn37, Asn45, Asn73, Asn83, Asn92, Asn95, Asn104, Asn116, Asn121, Asn131, and Asn144 each carry an N-linked (GlcNAc...) asparagine; by host glycan. Residues Cys40 and Cys115 are joined by a disulfide bond. A disordered region spans residues 167 to 191; that stretch reads VSHTTSTSHRPHRRPVSKRPTHKPV. Over residues 175–188 the composition is skewed to basic residues; that stretch reads HRPHRRPVSKRPTH. The chain crosses the membrane as a helical span at residues 210–230; it reads WALLLITCAVVAPVLLIIIIS.

This sequence belongs to the Epstein-Barr virus BILF2 protein family.

The protein localises to the membrane. This chain is Glycoprotein BILF2, found in Epstein-Barr virus (strain B95-8) (HHV-4).